A 323-amino-acid polypeptide reads, in one-letter code: tRNA-dihydrouridine(16) synthase (323 aa).

Residues 7 to 9 and glutamine 68 each bind FMN; that span reads PME. Cysteine 98 acts as the Proton donor in catalysis. FMN is bound by residues lysine 139, 200 to 202, and 224 to 225; these read NGE and CR.

This sequence belongs to the Dus family. DusC subfamily. FMN serves as cofactor.

The enzyme catalyses 5,6-dihydrouridine(16) in tRNA + NADP(+) = uridine(16) in tRNA + NADPH + H(+). It catalyses the reaction 5,6-dihydrouridine(16) in tRNA + NAD(+) = uridine(16) in tRNA + NADH + H(+). Its function is as follows. Catalyzes the synthesis of 5,6-dihydrouridine (D), a modified base found in the D-loop of most tRNAs, via the reduction of the C5-C6 double bond in target uridines. Specifically modifies U16 in tRNAs. This Vibrio cholerae serotype O1 (strain ATCC 39315 / El Tor Inaba N16961) protein is tRNA-dihydrouridine(16) synthase.